We begin with the raw amino-acid sequence, 218 residues long: Small ribosomal subunit protein uS3c (218 aa).

The KH type-2 domain maps to 47 to 118 (VYKNIRNSSN…KLRMTLTEVT (72 aa)).

It belongs to the universal ribosomal protein uS3 family. As to quaternary structure, part of the 30S ribosomal subunit.

It is found in the plastid. The protein resides in the chloroplast. In Physcomitrium patens (Spreading-leaved earth moss), this protein is Small ribosomal subunit protein uS3c (rps3).